Reading from the N-terminus, the 426-residue chain is Probable imidazolonepropionase (426 aa).

Residues tyrosine 159 and histidine 192 each contribute to the 4-imidazolone-5-propanoate site. Tyrosine 159 contributes to the N-formimidoyl-L-glutamate binding site. Histidine 260 is a binding site for Fe(3+). Histidine 260 contributes to the Zn(2+) binding site. Glutamate 263 is a 4-imidazolone-5-propanoate binding site. Aspartate 334 is a binding site for Fe(3+). Aspartate 334 provides a ligand contact to Zn(2+). Asparagine 336 contacts N-formimidoyl-L-glutamate.

It belongs to the metallo-dependent hydrolases superfamily. HutI family. It depends on Zn(2+) as a cofactor. Fe(3+) serves as cofactor.

The enzyme catalyses 4-imidazolone-5-propanoate + H2O = N-formimidoyl-L-glutamate. It functions in the pathway amino-acid degradation; L-histidine degradation into L-glutamate; N-formimidoyl-L-glutamate from L-histidine: step 3/3. The polypeptide is Probable imidazolonepropionase (Amdhd1) (Mus musculus (Mouse)).